The sequence spans 342 residues: AM-toxin biosynthesis protein 12 (342 aa).

Positions 1–20 (MSLLITSLAWGALLDPEVSS) are cleaved as a signal peptide.

It participates in mycotoxin biosynthesis. Part of the gene clusters that mediate the biosynthesis of AM-toxins, host-selective toxins (HSTs) causing Alternaria blotch on apple, a worldwide distributed disease. AM-toxins are cyclic depsipeptides containing the 3 residues 2-hydroxy-isovaleric acid (2-HIV), dehydroalanine, L-alanine which are common for all 3 AM-toxins I to III. The fourth precursor is L-alpha-amino-methoxyphenyl-valeric acid (L-Amv) for AM-toxin I, L-alpha-amino-phenyl-valeric acid (L-Apv) for AM-toxin II, and L-alpha-amino-hydroxyphenyl-valeric acid (L-Ahv) for AM-toxin III. AM-toxins have two target sites for affecting susceptible apple cells; they cause invagination of the plasma membrane and electrolyte loss and chloroplast disorganization. The non-ribosomal peptide synthetase AMT1 contains 4 catalytic modules and is responsible for activation of each residue in AM-toxin. The aldo-keto reductase AMT2 catalyzes the conversion of 2-keto-isovaleric acid (2-KIV) to 2-hydroxy-isovaleric acid (2-HIV), one of the precursor residues incorporated by AMT1 during AM-toxin biosynthesis, by reduction of its ketone to an alcohol. The cytochrome P450 monooxygenase AMT3 and the thioesterase AMT4 are also important for AM-toxin production, but their exact function within the AM-toxin biosynthesis are not known yet. Up to 21 proteins (including AMT1 to AMT4) are predicted to be involved in AM-toxin biosynthesis since their expression ishighly up-regulated in AM-toxin-producing cultures. The polypeptide is AM-toxin biosynthesis protein 12 (Alternaria alternata (Alternaria rot fungus)).